We begin with the raw amino-acid sequence, 717 residues long: Polyribonucleotide nucleotidyltransferase (717 aa).

The Mg(2+) site is built by Asp-488 and Asp-494. One can recognise a KH domain in the interval 555–614 (PRIEVMNIPVDKIREVIGSGGKVIREIVEKTGAKINIDDDGTVKIASASAKEIEAARKWI). Residues 624-692 (GQVYEGTVVK…ERGKVRLSMK (69 aa)) enclose the S1 motif domain.

It belongs to the polyribonucleotide nucleotidyltransferase family. Requires Mg(2+) as cofactor.

The protein localises to the cytoplasm. The enzyme catalyses RNA(n+1) + phosphate = RNA(n) + a ribonucleoside 5'-diphosphate. In terms of biological role, involved in mRNA degradation. Catalyzes the phosphorolysis of single-stranded polyribonucleotides processively in the 3'- to 5'-direction. The protein is Polyribonucleotide nucleotidyltransferase of Rhizobium meliloti (strain 1021) (Ensifer meliloti).